Consider the following 295-residue polypeptide: Bifunctional protein FolD (295 aa).

NADP(+) contacts are provided by residues 166–168, S195, and I236; that span reads GRS.

This sequence belongs to the tetrahydrofolate dehydrogenase/cyclohydrolase family. As to quaternary structure, homodimer.

The catalysed reaction is (6R)-5,10-methylene-5,6,7,8-tetrahydrofolate + NADP(+) = (6R)-5,10-methenyltetrahydrofolate + NADPH. It carries out the reaction (6R)-5,10-methenyltetrahydrofolate + H2O = (6R)-10-formyltetrahydrofolate + H(+). The protein operates within one-carbon metabolism; tetrahydrofolate interconversion. In terms of biological role, catalyzes the oxidation of 5,10-methylenetetrahydrofolate to 5,10-methenyltetrahydrofolate and then the hydrolysis of 5,10-methenyltetrahydrofolate to 10-formyltetrahydrofolate. In Pelodictyon phaeoclathratiforme (strain DSM 5477 / BU-1), this protein is Bifunctional protein FolD.